A 397-amino-acid polypeptide reads, in one-letter code: LL-diaminopimelate aminotransferase (397 aa).

Substrate-binding residues include Tyr14 and Gly41. Residues Tyr71, 104–105, Tyr128, Asn174, Tyr205, and 233–235 contribute to the pyridoxal 5'-phosphate site; these read AK and SFS. The substrate site is built by Lys105, Tyr128, and Asn174. Lys236 bears the N6-(pyridoxal phosphate)lysine mark. Pyridoxal 5'-phosphate contacts are provided by Arg244 and Asn275. Residues Asn275 and Arg368 each coordinate substrate.

This sequence belongs to the class-I pyridoxal-phosphate-dependent aminotransferase family. LL-diaminopimelate aminotransferase subfamily. In terms of assembly, homodimer. Pyridoxal 5'-phosphate is required as a cofactor.

It catalyses the reaction (2S,6S)-2,6-diaminopimelate + 2-oxoglutarate = (S)-2,3,4,5-tetrahydrodipicolinate + L-glutamate + H2O + H(+). It functions in the pathway amino-acid biosynthesis; L-lysine biosynthesis via DAP pathway; LL-2,6-diaminopimelate from (S)-tetrahydrodipicolinate (aminotransferase route): step 1/1. In terms of biological role, involved in the synthesis of meso-diaminopimelate (m-DAP or DL-DAP), required for both lysine and peptidoglycan biosynthesis. Catalyzes the direct conversion of tetrahydrodipicolinate to LL-diaminopimelate. The chain is LL-diaminopimelate aminotransferase from Chlamydia pneumoniae (Chlamydophila pneumoniae).